The chain runs to 165 residues: Endoribonuclease YbeY (165 aa).

Residues histidine 131, histidine 135, and histidine 141 each contribute to the Zn(2+) site.

This sequence belongs to the endoribonuclease YbeY family. Requires Zn(2+) as cofactor.

It localises to the cytoplasm. Single strand-specific metallo-endoribonuclease involved in late-stage 70S ribosome quality control and in maturation of the 3' terminus of the 16S rRNA. The protein is Endoribonuclease YbeY of Agathobacter rectalis (strain ATCC 33656 / DSM 3377 / JCM 17463 / KCTC 5835 / VPI 0990) (Eubacterium rectale).